Here is a 287-residue protein sequence, read N- to C-terminus: Cyclopropane mycolic acid synthase MmaA2 (287 aa).

S-adenosyl-L-methionine-binding positions include 33-34 (YS), 72-74 (GCG), 94-99 (TLSKNQ), 123-124 (WE), and Ile-136. Residue Cys-269 is part of the active site.

The protein belongs to the CFA/CMAS family.

The enzyme catalyses a 1-acyl-2-(9Z)-enoyl-sn-glycero-3-phospholipid + S-adenosyl-L-methionine = a 1-acyl-2-(9-cyclopronane)-acyl-sn-glycero-3-phospholipid + S-adenosyl-L-homocysteine + H(+). It participates in lipid metabolism; mycolic acid biosynthesis. Its function is as follows. Catalyzes the conversion of a double bond to a cis cyclopropane ring at the distal position of an alpha mycolic acid via the transfer of a methylene group from S-adenosyl-L-methionine. MmaA2 also catalyzes the biosynthesis of the cis-cyclopropanated methoxymycolates. Cyclopropanated mycolic acids are key factors participating in cell envelope permeability, host immunomodulation and persistence. The sequence is that of Cyclopropane mycolic acid synthase MmaA2 (cmaC) from Mycobacterium bovis (strain ATCC BAA-935 / AF2122/97).